The chain runs to 24 residues: Coenzyme PQQ synthesis protein A (24 aa).

The segment at residues 16–20 (EITMY) is a cross-link (pyrroloquinoline quinone (Glu-Tyr)).

The protein belongs to the PqqA family.

The protein operates within cofactor biosynthesis; pyrroloquinoline quinone biosynthesis. Functionally, required for coenzyme pyrroloquinoline quinone (PQQ) biosynthesis. PQQ is probably formed by cross-linking a specific glutamate to a specific tyrosine residue and excising these residues from the peptide. This Variovorax paradoxus (strain S110) protein is Coenzyme PQQ synthesis protein A.